The following is a 124-amino-acid chain: Fluoride-specific ion channel FluC (124 aa).

4 helical membrane-spanning segments follow: residues 1–21, 38–58, 69–89, and 97–117; these read MIPL…LRFA, TLAV…LFLV, GLIV…LDTV, and VALA…ATWA. 2 residues coordinate Na(+): G76 and T79.

This sequence belongs to the fluoride channel Fluc/FEX (TC 1.A.43) family.

The protein localises to the cell inner membrane. The enzyme catalyses fluoride(in) = fluoride(out). Its activity is regulated as follows. Na(+) is not transported, but it plays an essential structural role and its presence is essential for fluoride channel function. In terms of biological role, fluoride-specific ion channel. Important for reducing fluoride concentration in the cell, thus reducing its toxicity. The polypeptide is Fluoride-specific ion channel FluC (Pseudomonas fluorescens (strain ATCC BAA-477 / NRRL B-23932 / Pf-5)).